The chain runs to 318 residues: L-lactate dehydrogenase (318 aa).

Residues Val-17, Asp-38, Lys-43, Tyr-69, and 83-84 (GA) contribute to the NAD(+) site. Residues Gln-86 and Arg-92 each coordinate substrate. NAD(+)-binding positions include Ser-105, 122 to 124 (ATN), and Ser-147. 124 to 127 (NPVD) is a binding site for substrate. 152–155 (DTAR) is a substrate binding site. Beta-D-fructose 1,6-bisphosphate contacts are provided by Lys-157 and His-172. Catalysis depends on His-179, which acts as the Proton acceptor. Phosphotyrosine is present on Tyr-223. Thr-232 provides a ligand contact to substrate.

Belongs to the LDH/MDH superfamily. LDH family. Homotetramer.

The protein resides in the cytoplasm. The catalysed reaction is (S)-lactate + NAD(+) = pyruvate + NADH + H(+). It participates in fermentation; pyruvate fermentation to lactate; (S)-lactate from pyruvate: step 1/1. Its activity is regulated as follows. Allosterically activated by fructose 1,6-bisphosphate (FBP). In terms of biological role, catalyzes the conversion of lactate to pyruvate. The protein is L-lactate dehydrogenase of Staphylococcus saprophyticus subsp. saprophyticus (strain ATCC 15305 / DSM 20229 / NCIMB 8711 / NCTC 7292 / S-41).